Reading from the N-terminus, the 69-residue chain is Sperm protamine P1 (69 aa).

Residues 1 to 69 (MASYRNSRSR…RKRNNNTENK (69 aa)) are disordered. Basic residues-rich tracts occupy residues 7–25 (SRSRSRSRFRRRRRGRSRV) and 34–63 (RSSRRRRRGKGRAHSGKKGRRSGSRRRKRN).

This sequence belongs to the protamine P1 family. Testis.

It is found in the nucleus. The protein resides in the chromosome. Protamines substitute for histones in the chromatin of sperm during the haploid phase of spermatogenesis. They compact sperm DNA into a highly condensed, stable and inactive complex. The polypeptide is Sperm protamine P1 (PRM1) (Perameles gunnii (Eastern barred bandicoot)).